The sequence spans 454 residues: N-myc 2 proto-oncogene protein (454 aa).

Disordered regions lie at residues 133–166 (EKMQ…HSGT), 231–270 (AAPP…EEEE), and 326–374 (SPYV…VRRR). Over residues 256–270 (ALSDEVDEEEDEEEE) the composition is skewed to acidic residues. Residues 363-374 (RKSDSEDSVRRR) show a composition bias toward basic and acidic residues. The bHLH domain occupies 371 to 423 (VRRRNHNILERQRRNDLRSSFTTLRDHVPELVKNEKAAKVVILKKACEYVHYL). Positions 423-444 (LQAKEHQLLMEKEKLQARQQQL) are leucine-zipper.

Efficient DNA binding requires dimerization with another bHLH protein.

The protein localises to the nucleus. This Otospermophilus beecheyi (California ground squirrel) protein is N-myc 2 proto-oncogene protein (N-MYC2).